The following is a 202-amino-acid chain: Small ribosomal subunit protein uS2 (202 aa).

Belongs to the universal ribosomal protein uS2 family.

The chain is Small ribosomal subunit protein uS2 from Methanocorpusculum labreanum (strain ATCC 43576 / DSM 4855 / Z).